The sequence spans 379 residues: Cytochrome b (379 aa).

Transmembrane regions (helical) follow at residues 33 to 53 (FGSLLGLCLLIQILTGLFLAM), 77 to 98 (WLIRYMHANGASMFFICLFLHV), 113 to 133 (WNIGVILLFAVMATAFMGYVL), 178 to 198 (FFAFHFILPFIVAALVMVHLL), 226 to 246 (IKDVLGVLLLLLLFMMLVLFS), 288 to 308 (LGGVLALVFSILILMLFPILH), 320 to 340 (LSQCLFWILVADLFTLTWIGG), and 347 to 367 (FITIGQVASILYFTIILLALP). The heme b site is built by H83 and H97. Heme b-binding residues include H182 and H196.

The protein belongs to the cytochrome b family. As to quaternary structure, the cytochrome bc1 complex contains 11 subunits: 3 respiratory subunits (MT-CYB, CYC1 and UQCRFS1), 2 core proteins (UQCRC1 and UQCRC2) and 6 low-molecular weight proteins (UQCRH/QCR6, UQCRB/QCR7, UQCRQ/QCR8, UQCR10/QCR9, UQCR11/QCR10 and a cleavage product of UQCRFS1). This cytochrome bc1 complex then forms a dimer. It depends on heme b as a cofactor.

Its subcellular location is the mitochondrion inner membrane. In terms of biological role, component of the ubiquinol-cytochrome c reductase complex (complex III or cytochrome b-c1 complex) that is part of the mitochondrial respiratory chain. The b-c1 complex mediates electron transfer from ubiquinol to cytochrome c. Contributes to the generation of a proton gradient across the mitochondrial membrane that is then used for ATP synthesis. The protein is Cytochrome b (MT-CYB) of Sciurus niger (Eastern fox squirrel).